Here is a 238-residue protein sequence, read N- to C-terminus: Ribosomal RNA large subunit methyltransferase E (238 aa).

S-adenosyl-L-methionine contacts are provided by glycine 85, tryptophan 87, aspartate 113, aspartate 129, and aspartate 153. Lysine 193 acts as the Proton acceptor in catalysis.

The protein belongs to the class I-like SAM-binding methyltransferase superfamily. RNA methyltransferase RlmE family.

The protein localises to the cytoplasm. The enzyme catalyses uridine(2552) in 23S rRNA + S-adenosyl-L-methionine = 2'-O-methyluridine(2552) in 23S rRNA + S-adenosyl-L-homocysteine + H(+). Functionally, specifically methylates the uridine in position 2552 of 23S rRNA at the 2'-O position of the ribose in the fully assembled 50S ribosomal subunit. In Ruegeria sp. (strain TM1040) (Silicibacter sp.), this protein is Ribosomal RNA large subunit methyltransferase E.